The primary structure comprises 90 residues: Molybdopterin synthase sulfur carrier subunit (90 aa).

G90 is modified (1-thioglycine; alternate). G90 carries the glycyl adenylate; alternate modification.

This sequence belongs to the MoaD family. MOCS2A subfamily. As to quaternary structure, heterotetramer; composed of 2 small (Mocs2A) and 2 large (Mocs2B) subunits. In terms of processing, C-terminal thiocarboxylation occurs in 2 steps, it is first acyl-adenylated (-COAMP) via the hesA/moeB/thiF part of MOCS3, then thiocarboxylated (-COSH) via the rhodanese domain of MOCS3.

It is found in the cytoplasm. It functions in the pathway cofactor biosynthesis; molybdopterin biosynthesis. Its function is as follows. Acts as a sulfur carrier required for molybdopterin biosynthesis. Component of the molybdopterin synthase complex that catalyzes the conversion of precursor Z into molybdopterin by mediating the incorporation of 2 sulfur atoms into precursor Z to generate a dithiolene group. In the complex, serves as sulfur donor by being thiocarboxylated (-COSH) at its C-terminus by MOCS3. After interaction with Mocs2B, the sulfur is then transferred to precursor Z to form molybdopterin. The protein is Molybdopterin synthase sulfur carrier subunit of Drosophila simulans (Fruit fly).